A 377-amino-acid chain; its full sequence is Actin-related protein T2 (377 aa).

Belongs to the actin family.

It is found in the cytoplasm. The protein localises to the cytoskeleton. The sequence is that of Actin-related protein T2 (ACTRT2) from Homo sapiens (Human).